The primary structure comprises 86 residues: Cell division topological specificity factor (86 aa).

The protein belongs to the MinE family.

Functionally, prevents the cell division inhibition by proteins MinC and MinD at internal division sites while permitting inhibition at polar sites. This ensures cell division at the proper site by restricting the formation of a division septum at the midpoint of the long axis of the cell. This chain is Cell division topological specificity factor, found in Shewanella halifaxensis (strain HAW-EB4).